The sequence spans 121 residues: Peptidyl-tRNA hydrolase (121 aa).

The protein belongs to the PTH2 family.

It localises to the cytoplasm. It catalyses the reaction an N-acyl-L-alpha-aminoacyl-tRNA + H2O = an N-acyl-L-amino acid + a tRNA + H(+). Its function is as follows. The natural substrate for this enzyme may be peptidyl-tRNAs which drop off the ribosome during protein synthesis. The sequence is that of Peptidyl-tRNA hydrolase from Staphylothermus marinus (strain ATCC 43588 / DSM 3639 / JCM 9404 / F1).